Here is a 184-residue protein sequence, read N- to C-terminus: Ribosome maturation factor RimP (184 aa).

This sequence belongs to the RimP family.

Its subcellular location is the cytoplasm. In terms of biological role, required for maturation of 30S ribosomal subunits. This is Ribosome maturation factor RimP from Corynebacterium diphtheriae (strain ATCC 700971 / NCTC 13129 / Biotype gravis).